The chain runs to 384 residues: MKLGRFLENGREQIRNLLLNASTVSSAPSFSFVSGNESADLDSCASSIVYAYCLQRKQLGRIVVPFFNIPRKELRLRPELSYLLNLASISSDDIVFLDDIVKLPKRIFSNPIYLVDHNSLDRKDLENFNGSIAGIIDHHKDEGGSLHADPRIIEECGSCCTLVCRYFMPVIRSLYDSKVSELHQTATNLAVLALGPILIDTGNLKNEKTTDTDVKIVNDLCSFVPKDWVRDEFFDTLKEKKKSCKGFSFDDLLRRDLKQYFPDGIVVNYASVGKGLDWIKKKRLGWEDELKSFAEVQNSDLVIVGLSLSKNDEFGRQLILYKRTERGAGLADSFLKLSKQNLGLEIIEEKDNGDLSMWNQRNSAASRKKVVPLLMDSVKQVASK.

Mn(2+)-binding residues include Asp-40, Asp-42, Asp-116, His-138, and Asp-200.

Belongs to the PPase class C family. Requires Mn(2+) as cofactor.

It catalyses the reaction [phosphate](n) + H2O = [phosphate](n-1) + phosphate + H(+). Functionally, degradation of inorganic polyphosphates. This Schizosaccharomyces pombe (strain 972 / ATCC 24843) (Fission yeast) protein is Putative exopolyphosphatase.